We begin with the raw amino-acid sequence, 545 residues long: Degenerin-like protein asic-2 (545 aa).

Residues 1–34 (MRGGGFVQIFKDFSNWSTVAVVPHVANANNKISR) are Cytoplasmic-facing. A helical membrane pass occupies residues 35-55 (IFWIAIFLFVLGMFAYELYIL). Residues 56-457 (IAKFFSYPAT…NVINDLGGQA (402 aa)) are Extracellular-facing. Cysteines 83 and 191 form a disulfide. The N-linked (GlcNAc...) asparagine glycan is linked to Asn-201. 5 cysteine pairs are disulfide-bonded: Cys-284-Cys-370, Cys-305-Cys-366, Cys-309-Cys-364, Cys-318-Cys-343, and Cys-320-Cys-334. The N-linked (GlcNAc...) asparagine glycan is linked to Asn-350. A helical transmembrane segment spans residues 458-478 (GLWLGLSVISVVEMTGLMLVM). The short motif at 462-464 (GLS) is the GAS motif; ion selectivity filter element. Topologically, residues 479–545 (GAFCVTGGAI…NKGDEEKKKK (67 aa)) are cytoplasmic. Composition is skewed to basic and acidic residues over residues 514 to 523 (DHLEKKHGEM) and 534 to 545 (IENKGDEEKKKK). The segment at 514 to 545 (DHLEKKHGEMESGSDGEVDDIENKGDEEKKKK) is disordered.

It belongs to the amiloride-sensitive sodium channel (TC 1.A.6) family. In terms of assembly, can form homotrimers. Heterotrimer; forms functional heterotrimers producing channel with different properties.

The protein localises to the cell membrane. It catalyses the reaction Na(+)(in) = Na(+)(out). With respect to regulation, inhibited by the diuretic drug amiloride. In terms of biological role, could form pH-gated heterotrimeric sodium channels that act as postsynaptic excitatory sensors in the nervous system, generating rapid, transient inward currents that fully desensitize upon extracellular acidification. This chain is Degenerin-like protein asic-2 (asic-2), found in Caenorhabditis elegans.